Reading from the N-terminus, the 156-residue chain is S-ribosylhomocysteine lyase (156 aa).

Residues H56, H60, and C123 each coordinate Fe cation.

This sequence belongs to the LuxS family. Homodimer. The cofactor is Fe cation.

It carries out the reaction S-(5-deoxy-D-ribos-5-yl)-L-homocysteine = (S)-4,5-dihydroxypentane-2,3-dione + L-homocysteine. Functionally, involved in the synthesis of autoinducer 2 (AI-2) which is secreted by bacteria and is used to communicate both the cell density and the metabolic potential of the environment. The regulation of gene expression in response to changes in cell density is called quorum sensing. Catalyzes the transformation of S-ribosylhomocysteine (RHC) to homocysteine (HC) and 4,5-dihydroxy-2,3-pentadione (DPD). In Staphylococcus aureus (strain bovine RF122 / ET3-1), this protein is S-ribosylhomocysteine lyase.